Reading from the N-terminus, the 466-residue chain is Soluble pyridine nucleotide transhydrogenase (466 aa).

36-45 provides a ligand contact to FAD; sequence ERYHQVGGGC.

The protein belongs to the class-I pyridine nucleotide-disulfide oxidoreductase family. The cofactor is FAD.

The protein localises to the cytoplasm. It catalyses the reaction NAD(+) + NADPH = NADH + NADP(+). In terms of biological role, conversion of NADPH, generated by peripheral catabolic pathways, to NADH, which can enter the respiratory chain for energy generation. This is Soluble pyridine nucleotide transhydrogenase from Colwellia psychrerythraea (strain 34H / ATCC BAA-681) (Vibrio psychroerythus).